The chain runs to 127 residues: Aspartate 1-decarboxylase (127 aa).

S25 (schiff-base intermediate with substrate; via pyruvic acid) is an active-site residue. S25 bears the Pyruvic acid (Ser) mark. Position 57 (T57) interacts with substrate. Residue Y58 is the Proton donor of the active site. 73-75 (GAA) is a substrate binding site.

It belongs to the PanD family. In terms of assembly, heterooctamer of four alpha and four beta subunits. It depends on pyruvate as a cofactor. In terms of processing, is synthesized initially as an inactive proenzyme, which is activated by self-cleavage at a specific serine bond to produce a beta-subunit with a hydroxyl group at its C-terminus and an alpha-subunit with a pyruvoyl group at its N-terminus.

The protein localises to the cytoplasm. It carries out the reaction L-aspartate + H(+) = beta-alanine + CO2. It functions in the pathway cofactor biosynthesis; (R)-pantothenate biosynthesis; beta-alanine from L-aspartate: step 1/1. Catalyzes the pyruvoyl-dependent decarboxylation of aspartate to produce beta-alanine. The chain is Aspartate 1-decarboxylase from Staphylococcus aureus (strain bovine RF122 / ET3-1).